The sequence spans 303 residues: Mitochondrial carrier homolog 2 (303 aa).

An N-acetylalanine modification is found at Ala-2. Topologically, residues Ala-2 to Thr-15 are mitochondrial intermembrane. 2 Solcar repeats span residues Ala-2–Ser-98 and Asp-118–Tyr-206. A helical membrane pass occupies residues Ile-16–Pro-36. The Cytoplasmic segment spans residues Pro-37–Arg-77. Residues Leu-78–Leu-92 traverse the membrane as a helical segment. Residues Gln-93–Thr-135 are Mitochondrial intermembrane-facing. A helical transmembrane segment spans residues Leu-136 to Glu-156. Over Ser-157–Ala-180 the chain is Cytoplasmic. A helical transmembrane segment spans residues Gly-181–Leu-199. Residues Ala-200–Ser-231 lie on the Mitochondrial intermembrane side of the membrane. Residues Met-232–Ala-252 traverse the membrane as a helical segment. Residues Gly-253–Arg-280 lie on the Cytoplasmic side of the membrane. Residues Gly-281–Ile-303 form a helical membrane-spanning segment.

This sequence belongs to the mitochondrial carrier (TC 2.A.29) family. As to quaternary structure, interacts with p15BID. In terms of tissue distribution, expressed in a wide variety of tissues. Predominant expressed in liver, kidney, heart, skeletal muscle and testis.

Its subcellular location is the mitochondrion outer membrane. Its function is as follows. Protein insertase that mediates insertion of transmembrane proteins into the mitochondrial outer membrane. Catalyzes insertion of proteins with alpha-helical transmembrane regions, such as signal-anchored, tail-anchored and multi-pass membrane proteins. Does not mediate insertion of beta-barrel transmembrane proteins. Also acts as a receptor for the truncated form of pro-apoptotic BH3-interacting domain death agonist (p15 BID) and has therefore a critical function in apoptosis. Regulates the quiescence/cycling of hematopoietic stem cells (HSCs). Acts as a regulator of mitochondrial fusion, essential for the naive-to-primed interconversion of embryonic stem cells (ESCs). Acts as a regulator of lipid homeostasis and has a regulatory role in adipocyte differentiation and biology. The sequence is that of Mitochondrial carrier homolog 2 from Mus musculus (Mouse).